The primary structure comprises 45 residues: Photosystem II reaction center protein K (45 aa).

Residues 1-8 constitute a propeptide that is removed on maturation; the sequence is MEAVLLLA. The helical transmembrane segment at 24-44 threads the bilayer; that stretch reads MPVIPLFFLALAFVWQAAVGF.

This sequence belongs to the PsbK family. As to quaternary structure, PSII is composed of 1 copy each of membrane proteins PsbA, PsbB, PsbC, PsbD, PsbE, PsbF, PsbH, PsbI, PsbJ, PsbK, PsbL, PsbM, PsbT, PsbX, PsbY, PsbZ, Psb30/Ycf12, peripheral proteins PsbO, CyanoQ (PsbQ), PsbU, PsbV and a large number of cofactors. It forms dimeric complexes.

Its subcellular location is the cellular thylakoid membrane. In terms of biological role, one of the components of the core complex of photosystem II (PSII). PSII is a light-driven water:plastoquinone oxidoreductase that uses light energy to abstract electrons from H(2)O, generating O(2) and a proton gradient subsequently used for ATP formation. It consists of a core antenna complex that captures photons, and an electron transfer chain that converts photonic excitation into a charge separation. This chain is Photosystem II reaction center protein K, found in Acaryochloris marina (strain MBIC 11017).